The sequence spans 147 residues: Deoxyuridine 5'-triphosphate nucleotidohydrolase (147 aa).

Mg(2+) is bound at residue Arg24. DUTP-binding positions include 68–70 (PRS), 82–85 (GVID), Tyr88, Gly93, Ile95, and Arg111.

This sequence belongs to the dUTPase family. Mg(2+) is required as a cofactor.

The catalysed reaction is dUTP + H2O = dUMP + diphosphate + H(+). Functionally, this enzyme is involved in nucleotide metabolism: it produces dUMP, the immediate precursor of thymidine nucleotides and it decreases the intracellular concentration of dUTP so that uracil cannot be incorporated into DNA. The protein is Deoxyuridine 5'-triphosphate nucleotidohydrolase (OPG046) of Bos taurus (Bovine).